The chain runs to 147 residues: Large ribosomal subunit protein bL9 (147 aa).

This sequence belongs to the bacterial ribosomal protein bL9 family.

In terms of biological role, binds to the 23S rRNA. The polypeptide is Large ribosomal subunit protein bL9 (Clostridium acetobutylicum (strain ATCC 824 / DSM 792 / JCM 1419 / IAM 19013 / LMG 5710 / NBRC 13948 / NRRL B-527 / VKM B-1787 / 2291 / W)).